The sequence spans 1197 residues: Sensor protein EvgS (1197 aa).

The first 21 residues, 1–21 (MKFLPYIFLLCCGLWSTISFA), serve as a signal peptide directing secretion. Residues 22 to 325 (DEDYIEYRGI…SMTDENGSVR (304 aa)) are Cytoplasmic-facing. The helical transmembrane segment at 326–346 (GVMGDILNIITLQTGLNFSPI) threads the bilayer. Residues 347-537 (TVSHNIHAGT…TWDLYSEQFY (191 aa)) lie on the Periplasmic side of the membrane. The helical transmembrane segment at 538–558 (IVTTLSVLLVGSSLLWGFYLL) threads the bilayer. Over 559-1197 (RSVRRRKVIQ…EIAVFCQQNN (639 aa)) the chain is Cytoplasmic. Residues 718–938 (TMSHEIRTPI…TFTITIPVEI (221 aa)) form the Histidine kinase domain. His-721 is modified (phosphohistidine; by autocatalysis). Positions 960–1074 (SILIADDHPT…VLKTHLSQLH (115 aa)) constitute a Response regulatory domain. Residue Asp-1009 is modified to 4-aspartylphosphate. Residues 1098–1197 (DLQLMQEILM…EIAVFCQQNN (100 aa)) form the HPt domain. His-1137 carries the post-translational modification Phosphohistidine.

Activation requires a sequential transfer of a phosphate group from a His in the primary transmitter domain, to an Asp in the receiver domain and to a His in the secondary transmitter domain.

Its subcellular location is the cell inner membrane. It catalyses the reaction ATP + protein L-histidine = ADP + protein N-phospho-L-histidine.. In terms of biological role, member of the two-component regulatory system EvgS/EvgA. Phosphorylates EvgA via a four-step phosphorelay in response to environmental signals. This is Sensor protein EvgS (evgS) from Escherichia coli O157:H7.